Here is a 138-residue protein sequence, read N- to C-terminus: Putative pre-16S rRNA nuclease (138 aa).

Belongs to the YqgF nuclease family.

The protein localises to the cytoplasm. Functionally, could be a nuclease involved in processing of the 5'-end of pre-16S rRNA. The protein is Putative pre-16S rRNA nuclease of Azobacteroides pseudotrichonymphae genomovar. CFP2.